We begin with the raw amino-acid sequence, 147 residues long: MKIVIQRVQSASVAIEDSTVGTIKQGLLLLVGVGPEDTKEDLDYAVRKIINMRIFSDEDGKMNLSVKDIGGQILSISQFTLFADTKKGNRPAFTGAAKPDMASQFYDDFNQSLSSYVPVERGRFGADMQVSLVNDGPVTVILDTKNR.

The Gly-cisPro motif, important for rejection of L-amino acids signature appears at 136–137 (GP).

It belongs to the DTD family. In terms of assembly, homodimer.

It localises to the cytoplasm. It catalyses the reaction glycyl-tRNA(Ala) + H2O = tRNA(Ala) + glycine + H(+). It carries out the reaction a D-aminoacyl-tRNA + H2O = a tRNA + a D-alpha-amino acid + H(+). An aminoacyl-tRNA editing enzyme that deacylates mischarged D-aminoacyl-tRNAs. Also deacylates mischarged glycyl-tRNA(Ala), protecting cells against glycine mischarging by AlaRS. Acts via tRNA-based rather than protein-based catalysis; rejects L-amino acids rather than detecting D-amino acids in the active site. By recycling D-aminoacyl-tRNA to D-amino acids and free tRNA molecules, this enzyme counteracts the toxicity associated with the formation of D-aminoacyl-tRNA entities in vivo and helps enforce protein L-homochirality. This is D-aminoacyl-tRNA deacylase from Streptococcus thermophilus (strain CNRZ 1066).